The sequence spans 63 residues: Toxin Tx7335 (63 aa).

4 cysteine pairs are disulfide-bonded: Cys3-Cys24, Cys17-Cys39, Cys25-Cys55, and Cys56-Cys61.

Contains 4 disulfide bonds. Expressed by the venom gland.

It is found in the secreted. Functionally, activates bacterial pH-gated potassium channel KcsA by binding to its extracellular domain, probably at a site different from channel inhibitors. Increases both mean open time and open probability of KscA. This is Toxin Tx7335 from Dendroaspis angusticeps (Eastern green mamba).